A 630-amino-acid polypeptide reads, in one-letter code: DNA topoisomerase 4 subunit B (630 aa).

ATP is bound by residues Tyr5, Asn42, Asp69, 110 to 116, and Lys334; that span reads GLHGVGI. The 114-residue stretch at 412-525 folds into the Toprim domain; sequence TELFLVEGDS…NGHVYVALPP (114 aa). 3 residues coordinate Mg(2+): Glu418, Asp490, and Asp492.

This sequence belongs to the type II topoisomerase family. ParE type 1 subfamily. In terms of assembly, heterotetramer composed of ParC and ParE. The cofactor is Mg(2+). Requires Mn(2+) as cofactor. Ca(2+) serves as cofactor.

The catalysed reaction is ATP-dependent breakage, passage and rejoining of double-stranded DNA.. Its function is as follows. Topoisomerase IV is essential for chromosome segregation. It relaxes supercoiled DNA. Performs the decatenation events required during the replication of a circular DNA molecule. This is DNA topoisomerase 4 subunit B from Salmonella typhi.